The following is a 383-amino-acid chain: 8-amino-7-oxononanoate synthase (383 aa).

R21 serves as a coordination point for substrate. A pyridoxal 5'-phosphate-binding site is contributed by 108–109 (GY). H133 is a binding site for substrate. Pyridoxal 5'-phosphate contacts are provided by S179, H207, and T233. At K236 the chain carries N6-(pyridoxal phosphate)lysine. T350 provides a ligand contact to substrate.

It belongs to the class-II pyridoxal-phosphate-dependent aminotransferase family. BioF subfamily. Homodimer. Pyridoxal 5'-phosphate is required as a cofactor.

The catalysed reaction is 6-carboxyhexanoyl-[ACP] + L-alanine + H(+) = (8S)-8-amino-7-oxononanoate + holo-[ACP] + CO2. The protein operates within cofactor biosynthesis; biotin biosynthesis. In terms of biological role, catalyzes the decarboxylative condensation of pimeloyl-[acyl-carrier protein] and L-alanine to produce 8-amino-7-oxononanoate (AON), [acyl-carrier protein], and carbon dioxide. The protein is 8-amino-7-oxononanoate synthase of Photorhabdus laumondii subsp. laumondii (strain DSM 15139 / CIP 105565 / TT01) (Photorhabdus luminescens subsp. laumondii).